Here is a 63-residue protein sequence, read N- to C-terminus: Cytochrome c oxidase subunit 5C-1 (63 aa).

The helical transmembrane segment at 15 to 34 (SEVKELIIGSVLGLAAGGLW) threads the bilayer.

It belongs to the cytochrome c oxidase subunit 5C family.

It is found in the mitochondrion inner membrane. This protein is one of the nuclear-coded polypeptide chains of cytochrome c oxidase, the terminal oxidase in mitochondrial electron transport. The sequence is that of Cytochrome c oxidase subunit 5C-1 (COX5C1) from Helianthus annuus (Common sunflower).